The chain runs to 306 residues: Phenylcoumaran benzylic ether reductase IRL1 (306 aa).

NADP(+) contacts are provided by residues 10–16 (GATGYIG), arginine 35, and lysine 44. Residue lysine 132 is the Proton acceptor of the active site. Arginine 136 contacts NADP(+).

It belongs to the NmrA-type oxidoreductase family. Isoflavone reductase subfamily. Highly expressed in sclerotesta. Expressed in roots, and two-to-four year stems.

It catalyses the reaction (-)-dehydrodiconiferyl alcohol + NADPH + H(+) = (S)-isodihydrodehydrodiconiferyl alcohol + NADP(+). It carries out the reaction (+)-dehydrodiconiferyl alcohol + NADPH + H(+) = (R)-isodihydrodehydrodiconiferyl alcohol + NADP(+). The enzyme catalyses (2R,3S)-dihydrodehydrodiconiferyl alcohol + NADPH + H(+) = (S)-tetrahydrodehydrodiconiferyl alcohol + NADP(+). The catalysed reaction is (2S,3R)-dihydrodehydrodiconiferyl alcohol + NADPH + H(+) = (R)-tetrahydrodehydrodiconiferyl alcohol + NADP(+). Its function is as follows. Oxidoreductase involved in lignan biosynthesis. Catalyzes the NADPH-dependent reduction of phenylcoumaran benzylic ethers. Converts dehydrodiconiferyl alcohol (DDC) to isodihydrodehydrodiconiferyl alcohol (IDDDC), and dihydrodehydrodiconiferyl alcohol (DDDC) to tetrahydrodehydrodiconiferyl alcohol (TDDC). May regulate changes in lignin content and accumulation of flavonoids. This chain is Phenylcoumaran benzylic ether reductase IRL1, found in Ginkgo biloba (Ginkgo).